Reading from the N-terminus, the 347-residue chain is Phenylalanine--tRNA ligase alpha subunit (347 aa).

Glu262 is a binding site for Mg(2+).

Belongs to the class-II aminoacyl-tRNA synthetase family. Phe-tRNA synthetase alpha subunit type 1 subfamily. Tetramer of two alpha and two beta subunits. It depends on Mg(2+) as a cofactor.

It is found in the cytoplasm. The catalysed reaction is tRNA(Phe) + L-phenylalanine + ATP = L-phenylalanyl-tRNA(Phe) + AMP + diphosphate + H(+). This Roseiflexus sp. (strain RS-1) protein is Phenylalanine--tRNA ligase alpha subunit.